The chain runs to 77 residues: Large ribosomal subunit protein bL28 (77 aa).

The segment at 1–26 is disordered; sequence MARVCKVTGKRPMSGNNVSHANNKTK.

This sequence belongs to the bacterial ribosomal protein bL28 family.

The polypeptide is Large ribosomal subunit protein bL28 (Neisseria gonorrhoeae (strain ATCC 700825 / FA 1090)).